A 143-amino-acid chain; its full sequence is HTH-type transcriptional regulator MntR (143 aa).

An HTH dtxR-type domain is found at 1–63 (MPTPSMEDYL…YERYRGLVLT (63 aa)). Mn(2+) contacts are provided by aspartate 8, glutamate 11, histidine 77, glutamate 99, glutamate 102, and histidine 103.

The protein belongs to the DtxR/MntR family. As to quaternary structure, homodimer.

The protein resides in the cytoplasm. Its activity is regulated as follows. DNA binding is strongly activated by Mn(2+). Central regulator of manganese homeostasis. The polypeptide is HTH-type transcriptional regulator MntR (Shouchella clausii (strain KSM-K16) (Alkalihalobacillus clausii)).